A 147-amino-acid chain; its full sequence is Sec-independent protein translocase protein TatB (147 aa).

Residues 2-22 (FSSIGWPEIFTVLILGLIIIG) traverse the membrane as a helical segment. The tract at residues 96–147 (FDPKKIMASGTEGEAYRERGINPQPAGDSASPQTPSNKESQPKAGFSWDDIT) is disordered. Residues 125–134 (ASPQTPSNKE) are compositionally biased toward polar residues.

The protein belongs to the TatB family. In terms of assembly, the Tat system comprises two distinct complexes: a TatABC complex, containing multiple copies of TatA, TatB and TatC subunits, and a separate TatA complex, containing only TatA subunits. Substrates initially bind to the TatABC complex, which probably triggers association of the separate TatA complex to form the active translocon.

It is found in the cell membrane. Functionally, part of the twin-arginine translocation (Tat) system that transports large folded proteins containing a characteristic twin-arginine motif in their signal peptide across membranes. Together with TatC, TatB is part of a receptor directly interacting with Tat signal peptides. TatB may form an oligomeric binding site that transiently accommodates folded Tat precursor proteins before their translocation. In Corynebacterium diphtheriae (strain ATCC 700971 / NCTC 13129 / Biotype gravis), this protein is Sec-independent protein translocase protein TatB.